Here is a 123-residue protein sequence, read N- to C-terminus: Large ribosomal subunit protein bL12 (123 aa).

It belongs to the bacterial ribosomal protein bL12 family. As to quaternary structure, homodimer. Part of the ribosomal stalk of the 50S ribosomal subunit. Forms a multimeric L10(L12)X complex, where L10 forms an elongated spine to which 2 to 4 L12 dimers bind in a sequential fashion. Binds GTP-bound translation factors.

Functionally, forms part of the ribosomal stalk which helps the ribosome interact with GTP-bound translation factors. Is thus essential for accurate translation. The sequence is that of Large ribosomal subunit protein bL12 from Acholeplasma laidlawii (strain PG-8A).